A 416-amino-acid polypeptide reads, in one-letter code: UDP-N-acetylmuramoylalanine--D-glutamate ligase (416 aa).

104 to 110 (GSNGKST) contributes to the ATP binding site.

It belongs to the MurCDEF family.

Its subcellular location is the cytoplasm. The catalysed reaction is UDP-N-acetyl-alpha-D-muramoyl-L-alanine + D-glutamate + ATP = UDP-N-acetyl-alpha-D-muramoyl-L-alanyl-D-glutamate + ADP + phosphate + H(+). Its pathway is cell wall biogenesis; peptidoglycan biosynthesis. Its function is as follows. Cell wall formation. Catalyzes the addition of glutamate to the nucleotide precursor UDP-N-acetylmuramoyl-L-alanine (UMA). The chain is UDP-N-acetylmuramoylalanine--D-glutamate ligase from Francisella tularensis subsp. mediasiatica (strain FSC147).